Here is a 193-residue protein sequence, read N- to C-terminus: Large ribosomal subunit protein uL18 (193 aa).

Belongs to the universal ribosomal protein uL18 family. In terms of assembly, part of the 50S ribosomal subunit. Contacts the 5S and 23S rRNAs.

Functionally, this is one of the proteins that bind and probably mediate the attachment of the 5S RNA into the large ribosomal subunit, where it forms part of the central protuberance. This Methanococcus maripaludis (strain C5 / ATCC BAA-1333) protein is Large ribosomal subunit protein uL18.